Reading from the N-terminus, the 176-residue chain is Large ribosomal subunit protein uL16 (176 aa).

It belongs to the universal ribosomal protein uL16 family.

The protein is Large ribosomal subunit protein uL16 of Thermoplasma volcanium (strain ATCC 51530 / DSM 4299 / JCM 9571 / NBRC 15438 / GSS1).